We begin with the raw amino-acid sequence, 752 residues long: Peptidyl-prolyl cis-trans isomerase G (752 aa).

The PPIase cyclophilin-type domain occupies 11–176 (FFDIAINNQP…AEVRILSCGE (166 aa)). Residues 182 to 193 (KVKKEEKKRHKS) show a composition bias toward basic residues. Residues 182–752 (KVKKEEKKRH…SPGTDEDKSG (571 aa)) are disordered. Residues 194–214 (SSSSSSSDSDSSSDSQSSSES) show a composition bias toward low complexity. The segment covering 226–251 (RKRKKKHRKNSRKHKKEKKKRKKSKK) has biased composition (basic residues). 5 positions are modified to phosphoserine: Ser-252, Ser-254, Ser-255, Ser-257, and Ser-288. Basic and acidic residues predominate over residues 290 to 308 (PKADDKERKNREREREREC). Ser-313 carries the post-translational modification Phosphoserine. Over residues 327–345 (SGRKIKGRGPRRYRTPSRS) the composition is skewed to basic residues. 2 stretches are compositionally biased toward basic and acidic residues: residues 346–366 (RSRD…EMQR) and 377–447 (RWIK…DKYN). Ser-354 is modified (phosphoserine). Thr-356 is subject to Phosphothreonine. Ser-384 is subject to Phosphoserine. A Glycyl lysine isopeptide (Lys-Gly) (interchain with G-Cter in SUMO2) cross-link involves residue Lys-390. Ser-395, Ser-411, and Ser-413 each carry phosphoserine. Residues 448-461 (KNKVKKRGKSKSRS) show a composition bias toward basic residues. 2 stretches are compositionally biased toward basic and acidic residues: residues 462-552 (KSKE…DLTK) and 577-598 (RSHD…QEYR). Basic residues predominate over residues 599–625 (RRGRSRSRDRRTPGRSRSKDRRRRRRD). Residues 626–684 (SRSSEREESQSRNKDKYRSQESKSSHRKENSEGEKRTYSKSRDHNSSSNNREKKADREQ) show a composition bias toward basic and acidic residues. 2 positions are modified to phosphoserine: Ser-685 and Ser-688. The span at 685-705 (SPVSKTKQSSQDNEVKSSTLK) shows a compositional bias: polar residues. Lys-691 is covalently cross-linked (Glycyl lysine isopeptide (Lys-Gly) (interchain with G-Cter in SUMO2)). 3 positions are modified to phosphoserine: Ser-694, Ser-742, and Ser-743. Positions 706–752 (NQEDEKTRSPVEKENQKSKGQENDHVHDKNKKCDHESSPGTDEDKSG) are enriched in basic and acidic residues. At Thr-746 the chain carries Phosphothreonine. A Phosphoserine modification is found at Ser-751.

Interacts with CLK1, PNN and with the phosphorylated C-terminal domain of RNA polymerase II.

The protein resides in the nucleus matrix. Its subcellular location is the nucleus speckle. The catalysed reaction is [protein]-peptidylproline (omega=180) = [protein]-peptidylproline (omega=0). Inhibited by cyclosporin A (CsA). In terms of biological role, PPIase that catalyzes the cis-trans isomerization of proline imidic peptide bonds in oligopeptides and may therefore assist protein folding. May be implicated in the folding, transport, and assembly of proteins. May play an important role in the regulation of pre-mRNA splicing. The chain is Peptidyl-prolyl cis-trans isomerase G (Ppig) from Mus musculus (Mouse).